The chain runs to 451 residues: Bifunctional protein GlmU (451 aa).

The pyrophosphorylase stretch occupies residues 1-226; that stretch reads MVAVAILAAG…YLEISGINDR (226 aa). Residues 7 to 10, Lys-21, Gln-73, and 78 to 79 each bind UDP-N-acetyl-alpha-D-glucosamine; these read LAAG and GT. Asp-103 provides a ligand contact to Mg(2+). UDP-N-acetyl-alpha-D-glucosamine contacts are provided by Gly-140, Glu-155, Asn-170, and Asn-224. Asn-224 serves as a coordination point for Mg(2+). The interval 227–247 is linker; sequence KQLATAYDILQNRIKDYWMRA. An N-acetyltransferase region spans residues 248–451; sequence GVTLIDPDSI…ISGWRMKTDD (204 aa). Positions 329 and 347 each coordinate UDP-N-acetyl-alpha-D-glucosamine. His-359 (proton acceptor) is an active-site residue. Residues Tyr-362 and Asn-373 each contribute to the UDP-N-acetyl-alpha-D-glucosamine site. Residues Ala-376, 382-383, Ala-419, and Arg-436 contribute to the acetyl-CoA site; that span reads NY.

It in the N-terminal section; belongs to the N-acetylglucosamine-1-phosphate uridyltransferase family. This sequence in the C-terminal section; belongs to the transferase hexapeptide repeat family. Homotrimer. Mg(2+) is required as a cofactor.

Its subcellular location is the cytoplasm. The enzyme catalyses alpha-D-glucosamine 1-phosphate + acetyl-CoA = N-acetyl-alpha-D-glucosamine 1-phosphate + CoA + H(+). It catalyses the reaction N-acetyl-alpha-D-glucosamine 1-phosphate + UTP + H(+) = UDP-N-acetyl-alpha-D-glucosamine + diphosphate. Its pathway is nucleotide-sugar biosynthesis; UDP-N-acetyl-alpha-D-glucosamine biosynthesis; N-acetyl-alpha-D-glucosamine 1-phosphate from alpha-D-glucosamine 6-phosphate (route II): step 2/2. It functions in the pathway nucleotide-sugar biosynthesis; UDP-N-acetyl-alpha-D-glucosamine biosynthesis; UDP-N-acetyl-alpha-D-glucosamine from N-acetyl-alpha-D-glucosamine 1-phosphate: step 1/1. The protein operates within bacterial outer membrane biogenesis; LPS lipid A biosynthesis. Functionally, catalyzes the last two sequential reactions in the de novo biosynthetic pathway for UDP-N-acetylglucosamine (UDP-GlcNAc). The C-terminal domain catalyzes the transfer of acetyl group from acetyl coenzyme A to glucosamine-1-phosphate (GlcN-1-P) to produce N-acetylglucosamine-1-phosphate (GlcNAc-1-P), which is converted into UDP-GlcNAc by the transfer of uridine 5-monophosphate (from uridine 5-triphosphate), a reaction catalyzed by the N-terminal domain. The chain is Bifunctional protein GlmU from Gloeothece citriformis (strain PCC 7424) (Cyanothece sp. (strain PCC 7424)).